A 707-amino-acid chain; its full sequence is Polyribonucleotide nucleotidyltransferase (707 aa).

The Mg(2+) site is built by Asp-486 and Asp-492. Residues Pro-553–Ile-612 form the KH domain. One can recognise an S1 motif domain in the interval Gly-622–Lys-690.

It belongs to the polyribonucleotide nucleotidyltransferase family. Component of the RNA degradosome, which is a multiprotein complex involved in RNA processing and mRNA degradation. Mg(2+) serves as cofactor.

Its subcellular location is the cytoplasm. The catalysed reaction is RNA(n+1) + phosphate = RNA(n) + a ribonucleoside 5'-diphosphate. Functionally, involved in mRNA degradation. Catalyzes the phosphorolysis of single-stranded polyribonucleotides processively in the 3'- to 5'-direction. The polypeptide is Polyribonucleotide nucleotidyltransferase (Edwardsiella ictaluri (strain 93-146)).